The primary structure comprises 83 residues: NAD(P)H-quinone oxidoreductase subunit L (83 aa).

2 helical membrane passes run 18–38 (ILAY…ALFF) and 53–73 (LLVY…APFL).

It belongs to the complex I NdhL subunit family. NDH-1 can be composed of about 15 different subunits; different subcomplexes with different compositions have been identified which probably have different functions.

It is found in the cellular thylakoid membrane. It carries out the reaction a plastoquinone + NADH + (n+1) H(+)(in) = a plastoquinol + NAD(+) + n H(+)(out). The catalysed reaction is a plastoquinone + NADPH + (n+1) H(+)(in) = a plastoquinol + NADP(+) + n H(+)(out). In terms of biological role, NDH-1 shuttles electrons from an unknown electron donor, via FMN and iron-sulfur (Fe-S) centers, to quinones in the respiratory and/or the photosynthetic chain. The immediate electron acceptor for the enzyme in this species is believed to be plastoquinone. Couples the redox reaction to proton translocation, and thus conserves the redox energy in a proton gradient. Cyanobacterial NDH-1 also plays a role in inorganic carbon-concentration. The chain is NAD(P)H-quinone oxidoreductase subunit L from Parasynechococcus marenigrum (strain WH8102).